The chain runs to 553 residues: Protein DA1-related 1 (553 aa).

The tract at residues 10–41 is disordered; the sequence is GSSHKFSDGQCNGRYREDRNLEGPRYSAEGSD. A UIM 1 domain is found at 42 to 61; that stretch reads FDKEEIECAIALSLSEQEHV. Residues 62 to 77 show a composition bias toward basic and acidic residues; that stretch reads IPQDDKGKKIIEYKSE. The interval 62 to 91 is disordered; it reads IPQDDKGKKIIEYKSETEEDDDDDEDEDEE. Positions 78-91 are enriched in acidic residues; the sequence is TEEDDDDDEDEDEE. One can recognise a UIM 2 domain in the interval 87–106; that stretch reads DEDEEYMRAQLEAAEEEERR. The UIM 3; degenerate domain maps to 122 to 141; the sequence is AQLEETEKLLAKARLEEEEM. The UIM 4 domain maps to 149–168; it reads EEDELLAKALQESMNVGSPP. Ser-166 is subject to Phosphoserine. The region spanning 188–248 is the LIM zinc-binding domain; sequence RICVGCQAEI…KLCYKEQHHP (61 aa).

In terms of assembly, interacts with ubiquitin, TCP14 and TCP15. In terms of processing, polyubiquitinated by DA2.

Its function is as follows. Acts redundantly with DA1 and DAR2 to regulate endoreduplication during leaf development. Together with DA1 and DAR2, modulates the protein stability of the transcription factors TCP14 and TCP15, which repress endoreduplication by directly regulating the expression of cell-cycle genes. The protein is Protein DA1-related 1 of Arabidopsis thaliana (Mouse-ear cress).